A 133-amino-acid polypeptide reads, in one-letter code: Small ribosomal subunit protein uS8 (133 aa).

The protein belongs to the universal ribosomal protein uS8 family. Part of the 30S ribosomal subunit. Contacts proteins S5 and S12.

Its function is as follows. One of the primary rRNA binding proteins, it binds directly to 16S rRNA central domain where it helps coordinate assembly of the platform of the 30S subunit. In Endomicrobium trichonymphae, this protein is Small ribosomal subunit protein uS8.